A 740-amino-acid chain; its full sequence is F-BAR and double SH3 domains protein 2 (740 aa).

The 275-residue stretch at 8 to 282 (VKVTQELRNI…NSSKVVRDYN (275 aa)) folds into the F-BAR domain. The interval 303 to 323 (PCDSDTSRQLESETGTTEEHS) is disordered. The segment covering 307–323 (DTSRQLESETGTTEEHS) has biased composition (basic and acidic residues). Residues 356–397 (GVALSEQSRAELEQKIDEARESIRKAEIIKLKAEARLDLLKQ) adopt a coiled-coil conformation. SH3 domains follow at residues 469 to 530 (NYPL…FPTS) and 567 to 629 (ASVC…ELSA). The interval 567 to 629 (ASVCFVKALY…PSVLVEELSA (63 aa)) is required and sufficient for location at clathrin-coated pits. Polar residues predominate over residues 629–645 (ASENGDTPWTREIQISP). The disordered stretch occupies residues 629 to 740 (ASENGDTPWT…KMEDVEITLV (112 aa)). The span at 646 to 657 (SPKPHTSLPPLP) shows a compositional bias: pro residues. Phosphoserine is present on residues Ser675 and Ser681. Polar residues predominate over residues 675 to 706 (SQFFPRSPSANENSLHAESPGFSQASRQTPDT).

In terms of assembly, homodimer. Interacts (via SH3 domain 2) with ITSN1 (via SH3 domain 4). Recruited to clathrin-coated pits during a mid-to-late stage of assembly via interaction with ITSN1. Interacts (via SH3 domain 1) with WASL. Interacts with WAS. Interacts with CASK and MAGI1. CASK inhibits interaction with MAGI1. In terms of processing, phosphorylated. Phosphorylation on a Ser residue is important for recruitment to the cell membrane and for its role in promoting endocytosis. Detected in inner ear vestibula and in stereocilia in cochlear hair cell bundles (at protein level). Ubiquitous. Detected in testis, liver, brain cortex, cerebellum, kidney, organ of Corti, utricle, spiral ganglion, tongue and eye.

The protein localises to the cytoplasm. It localises to the cell junction. The protein resides in the membrane. It is found in the clathrin-coated pit. Its subcellular location is the cell membrane. The protein localises to the cell projection. It localises to the stereocilium. Functionally, adapter protein that plays a role in endocytosis via clathrin-coated pits. Contributes to the internalization of cell surface receptors, such as integrin ITGB1 and transferrin receptor. Promotes endocytosis of EGFR in cancer cells, and thereby contributes to the down-regulation of EGFR signaling. Recruited to clathrin-coated pits during a mid-to-late stage of assembly, where it is required for normal progress from U-shaped intermediate stage pits to terminal, omega-shaped pits. Binds to membranes enriched in phosphatidylinositol 3,4-bisphosphate or phosphatidylinositol 3,4,5-trisphosphate. When bound to membranes, promotes actin polymerization via its interaction with WAS and/or WASL which leads to the activation of the Arp2/3 complex. Does not promote actin polymerisation in the absence of membranes. In Mus musculus (Mouse), this protein is F-BAR and double SH3 domains protein 2 (Fchsd2).